The chain runs to 175 residues: Crossover junction endodeoxyribonuclease RuvC (175 aa).

Active-site residues include D16, E76, and D148. Mg(2+) contacts are provided by D16, E76, and D148.

It belongs to the RuvC family. In terms of assembly, homodimer which binds Holliday junction (HJ) DNA. The HJ becomes 2-fold symmetrical on binding to RuvC with unstacked arms; it has a different conformation from HJ DNA in complex with RuvA. In the full resolvosome a probable DNA-RuvA(4)-RuvB(12)-RuvC(2) complex forms which resolves the HJ. Mg(2+) serves as cofactor.

The protein resides in the cytoplasm. It carries out the reaction Endonucleolytic cleavage at a junction such as a reciprocal single-stranded crossover between two homologous DNA duplexes (Holliday junction).. Its function is as follows. The RuvA-RuvB-RuvC complex processes Holliday junction (HJ) DNA during genetic recombination and DNA repair. Endonuclease that resolves HJ intermediates. Cleaves cruciform DNA by making single-stranded nicks across the HJ at symmetrical positions within the homologous arms, yielding a 5'-phosphate and a 3'-hydroxyl group; requires a central core of homology in the junction. The consensus cleavage sequence is 5'-(A/T)TT(C/G)-3'. Cleavage occurs on the 3'-side of the TT dinucleotide at the point of strand exchange. HJ branch migration catalyzed by RuvA-RuvB allows RuvC to scan DNA until it finds its consensus sequence, where it cleaves and resolves the cruciform DNA. This is Crossover junction endodeoxyribonuclease RuvC from Bradyrhizobium sp. (strain ORS 278).